Reading from the N-terminus, the 308-residue chain is Spermidine synthase 2 (308 aa).

The PABS domain maps to 17–254 (PGWFSEISPL…GVIGFMLCST (238 aa)). Gln-48 contacts S-adenosyl 3-(methylsulfanyl)propylamine. Position 78 (Tyr-78) interacts with putrescine. Residues Gln-79, Asp-103, Glu-123, 154–155 (DG), and Asp-173 each bind S-adenosyl 3-(methylsulfanyl)propylamine. The active-site Proton acceptor is the Asp-173. Putrescine-binding positions include 173 to 176 (DSSD) and Tyr-242.

Belongs to the spermidine/spermine synthase family.

The catalysed reaction is S-adenosyl 3-(methylsulfanyl)propylamine + putrescine = S-methyl-5'-thioadenosine + spermidine + H(+). Its pathway is amine and polyamine biosynthesis; spermidine biosynthesis; spermidine from putrescine: step 1/1. This is Spermidine synthase 2 from Hyoscyamus niger (Black henbane).